The following is a 252-amino-acid chain: Triosephosphate isomerase (252 aa).

9–11 provides a ligand contact to substrate; sequence NWK. Histidine 95 serves as the catalytic Electrophile. Glutamate 167 (proton acceptor) is an active-site residue. Substrate is bound by residues glycine 173, serine 213, and 234 to 235; that span reads GG.

Belongs to the triosephosphate isomerase family. In terms of assembly, homodimer.

It is found in the cytoplasm. The catalysed reaction is D-glyceraldehyde 3-phosphate = dihydroxyacetone phosphate. Its pathway is carbohydrate biosynthesis; gluconeogenesis. It functions in the pathway carbohydrate degradation; glycolysis; D-glyceraldehyde 3-phosphate from glycerone phosphate: step 1/1. In terms of biological role, involved in the gluconeogenesis. Catalyzes stereospecifically the conversion of dihydroxyacetone phosphate (DHAP) to D-glyceraldehyde-3-phosphate (G3P). The chain is Triosephosphate isomerase from Syntrophotalea carbinolica (strain DSM 2380 / NBRC 103641 / GraBd1) (Pelobacter carbinolicus).